A 261-amino-acid polypeptide reads, in one-letter code: uncharacterized protein (261 aa).

This is an uncharacterized protein from Haemophilus influenzae (strain ATCC 51907 / DSM 11121 / KW20 / Rd).